We begin with the raw amino-acid sequence, 98 residues long: Cystatin-B (98 aa).

The region spanning 4 to 83 (GGTSQPVDAD…PCNGETLELS (80 aa)) is the Cystatin domain. The Secondary area of contact motif lies at 46 to 50 (QCVPG).

Belongs to the cystatin family. Ubiquitously expressed in normal and lipopolysaccharide (LPS)-stimulated tissues including brain, eye, gullet, heart, liver, muscle, stomach, kidney, spleen, pyloric ceca, intestine and gill.

It is found in the cytoplasm. Greatly decreased inhibitory activity against papain protease by metal ions including ZnSO(4), CuSO(4), HgCl(2) and CoCl(2). Decreased inhibitory activity against papain protease by detergents including Tween 20, SDS and Brij 35. Its function is as follows. Thiol protease inhibitor. Has high papain, bovine cathepsin B and fish cathepsins F and X inhibitory activity and inhibits fish cathepsins L, S and K to a lesser extent in vitro. May be involved in innate immunity. This is Cystatin-B from Paralichthys olivaceus (Bastard halibut).